Here is a 356-residue protein sequence, read N- to C-terminus: Histidinol-phosphate aminotransferase (356 aa).

Lys-214 bears the N6-(pyridoxal phosphate)lysine mark.

This sequence belongs to the class-II pyridoxal-phosphate-dependent aminotransferase family. Histidinol-phosphate aminotransferase subfamily. Homodimer. Pyridoxal 5'-phosphate serves as cofactor.

The enzyme catalyses L-histidinol phosphate + 2-oxoglutarate = 3-(imidazol-4-yl)-2-oxopropyl phosphate + L-glutamate. The protein operates within amino-acid biosynthesis; L-histidine biosynthesis; L-histidine from 5-phospho-alpha-D-ribose 1-diphosphate: step 7/9. The polypeptide is Histidinol-phosphate aminotransferase (Shigella boydii serotype 18 (strain CDC 3083-94 / BS512)).